Here is a 378-residue protein sequence, read N- to C-terminus: MTASPKQRIVVGLSGGVDSAVTAHLLKQQGHEVVGIFMKNWEDDDDSEYCSSNVDFVDAAAVADVIGIEIEHVNFAAEYKDRVFAEFLREYEAGRTPNPDVLCNAEIKFKAFLDHAMRVGAEKIATGHYARVRHNPATGLHELLKGLDPAKDQSYFLHRLNQSQLSRTLFPVGELRKTEVRRIAEEIGLPNAKKKDSTGICFIGERPFREFLNRYIQHAPGPILDDRGRRLGQHVGLSFYTLGQRQGLGIGGVKDKGAQRGGGEHAPWFVARKEVERNVLRVVQGHDHPWLLSHTLQATDANWVAGRPPAAGACAAKTRYRQQDAACTVTQAEGGDFALSFPEAQWAVTPGQSAVLYDGEVCLGGGVITAAGPVNSAA.

ATP-binding positions include 12 to 19 and Met-38; that span reads GLSGGVDS. The tract at residues 98 to 100 is interaction with target base in tRNA; sequence NPD. Catalysis depends on Cys-103, which acts as the Nucleophile. Cysteines 103 and 201 form a disulfide. An ATP-binding site is contributed by Gly-127. The interval 151–153 is interaction with tRNA; that stretch reads KDQ. Cys-201 functions as the Cysteine persulfide intermediate in the catalytic mechanism. An interaction with tRNA region spans residues 319–320; the sequence is RY.

It belongs to the MnmA/TRMU family.

The protein resides in the cytoplasm. The catalysed reaction is S-sulfanyl-L-cysteinyl-[protein] + uridine(34) in tRNA + AH2 + ATP = 2-thiouridine(34) in tRNA + L-cysteinyl-[protein] + A + AMP + diphosphate + H(+). In terms of biological role, catalyzes the 2-thiolation of uridine at the wobble position (U34) of tRNA, leading to the formation of s(2)U34. The polypeptide is tRNA-specific 2-thiouridylase MnmA (Paracidovorax citrulli (strain AAC00-1) (Acidovorax citrulli)).